Here is a 145-residue protein sequence, read N- to C-terminus: MSLWRQTPDLEQLNASQKNSIGDLLGIRFEAFDDESLTASMPVDSRTHQPFGLLHGGASVVLAESLGSMASYLCVDTSQYYCVGLEVNANHLRGLRSGRVTAVARAIHLGRTTHVWDIRLSGDDGKPSCIARLTMAVVPLAGRAG.

Belongs to the thioesterase PaaI family.

This chain is Putative esterase PA1618, found in Pseudomonas aeruginosa (strain ATCC 15692 / DSM 22644 / CIP 104116 / JCM 14847 / LMG 12228 / 1C / PRS 101 / PAO1).